The following is a 522-amino-acid chain: MAPSSSPEPVVDESHESSDSEVEQTELQSRAPKRRRLSESSTDSYVAPAPLPTLSRIKKKGADEENKPATSDKDEPVLIKDALEIGLNDAQNSFASLNVAPWLIGSLTTMAVRKPTAIQKACIPEILNGRDCIGGSRTGSGKTIAFSVPMLQKWAEDPFGIFGLVLTPTRELALQIYEQIKAISAPQSMKPLLITGGTDMRPQAVALAQRPHVVIATPGRLADHINTSGSDTIRGLKRVRMVVLDEADRLLAPGHGSMLPDVETCLSALPPSSERQTLLFTATLTPEVRALKSMPRPSTKPPIFVTEISTENNASIPPTLKQTYLKVPMTHREAFLHVLLSTEANASKPAIIFCNHTKTADLLERMLRRLSHRVTSLHSLLPQSERNANLARFRASAARLLVATDVASRGLDIPSVELVVNFDVPRNPDDYVHRVGRTARAGRKGESVTLVGQRDVSLVLAIEERVGRQMEEWSEEGVSVEGRVVRTGVLKEVGEAKREAAGEIEEGRDVLGRKRNKLKKVR.

A disordered region spans residues Met1 to Glu75. Residues Lys60–Glu75 are compositionally biased toward basic and acidic residues. Positions Asn92 to Lys120 match the Q motif motif. A Helicase ATP-binding domain is found at Ile123–Pro302. Residue Ser136–Thr143 coordinates ATP. Residues Asp245 to Asp248 carry the DEAD box motif. A Helicase C-terminal domain is found at Thr319 to Glu481.

It belongs to the DEAD box helicase family. DDX49/DBP8 subfamily.

The protein resides in the nucleus. It is found in the nucleolus. It carries out the reaction ATP + H2O = ADP + phosphate + H(+). Functionally, ATP-binding RNA helicase involved in 40S ribosomal subunit biogenesis and is required for the normal formation of 18S rRNAs through pre-rRNA processing at A0, A1 and A2 sites. Required for vegetative growth. In Aspergillus niger (strain ATCC MYA-4892 / CBS 513.88 / FGSC A1513), this protein is ATP-dependent RNA helicase dbp8 (dbp8).